We begin with the raw amino-acid sequence, 788 residues long: Protein translocase subunit SecA (788 aa).

ATP contacts are provided by residues glutamine 85, 103–107 (GEGKT), and aspartate 494.

Belongs to the SecA family. In terms of assembly, monomer and homodimer. Part of the essential Sec protein translocation apparatus which comprises SecA, SecYEG and auxiliary proteins SecDF. Other proteins may also be involved.

It localises to the cell membrane. The protein localises to the cytoplasm. The catalysed reaction is ATP + H2O + cellular proteinSide 1 = ADP + phosphate + cellular proteinSide 2.. In terms of biological role, part of the Sec protein translocase complex. Interacts with the SecYEG preprotein conducting channel. Has a central role in coupling the hydrolysis of ATP to the transfer of proteins into and across the cell membrane, serving as an ATP-driven molecular motor driving the stepwise translocation of polypeptide chains across the membrane. In Oenococcus oeni (strain ATCC BAA-331 / PSU-1), this protein is Protein translocase subunit SecA.